A 120-amino-acid chain; its full sequence is Glycine cleavage system H protein (120 aa).

Positions 17-99 (VATVGITAHA…MGAGWFFKLK (83 aa)) constitute a Lipoyl-binding domain. At Lys58 the chain carries N6-lipoyllysine.

The protein belongs to the GcvH family. In terms of assembly, the glycine cleavage system is composed of four proteins: P, T, L and H. It depends on (R)-lipoate as a cofactor.

Functionally, the glycine cleavage system catalyzes the degradation of glycine. The H protein shuttles the methylamine group of glycine from the P protein to the T protein. The polypeptide is Glycine cleavage system H protein (Rhizobium rhizogenes (strain K84 / ATCC BAA-868) (Agrobacterium radiobacter)).